A 124-amino-acid polypeptide reads, in one-letter code: Fluoride-specific ion channel FluC (124 aa).

4 helical membrane passes run 4 to 24, 35 to 55, 67 to 87, and 96 to 116; these read IVLL…LAGL, LGTF…WGVC, VVLL…TFES, and WLAF…LLWL. Gly-75 and Thr-78 together coordinate Na(+).

This sequence belongs to the fluoride channel Fluc/FEX (TC 1.A.43) family.

Its subcellular location is the cell inner membrane. The enzyme catalyses fluoride(in) = fluoride(out). Na(+) is not transported, but it plays an essential structural role and its presence is essential for fluoride channel function. Its function is as follows. Fluoride-specific ion channel. Important for reducing fluoride concentration in the cell, thus reducing its toxicity. The polypeptide is Fluoride-specific ion channel FluC (Nitratidesulfovibrio vulgaris (strain DSM 19637 / Miyazaki F) (Desulfovibrio vulgaris)).